The following is a 109-amino-acid chain: UPF0060 membrane protein PSPA7_1846 (109 aa).

4 helical membrane-spanning segments follow: residues 5–25, 27–47, 59–79, and 84–104; these read LWFV…YLWL, LGKS…FALL, AYAA…AFVE, and LWSD…VLFG.

Belongs to the UPF0060 family.

Its subcellular location is the cell inner membrane. The protein is UPF0060 membrane protein PSPA7_1846 of Pseudomonas paraeruginosa (strain DSM 24068 / PA7) (Pseudomonas aeruginosa (strain PA7)).